Reading from the N-terminus, the 291-residue chain is Elongation factor Ts (291 aa).

The tract at residues threonine 79–valine 82 is involved in Mg(2+) ion dislocation from EF-Tu.

It belongs to the EF-Ts family.

Its subcellular location is the cytoplasm. Its function is as follows. Associates with the EF-Tu.GDP complex and induces the exchange of GDP to GTP. It remains bound to the aminoacyl-tRNA.EF-Tu.GTP complex up to the GTP hydrolysis stage on the ribosome. The protein is Elongation factor Ts of Ruegeria sp. (strain TM1040) (Silicibacter sp.).